We begin with the raw amino-acid sequence, 168 residues long: MKILEKETSIIRVGIADVKIVRTPDKIRTSGLGSCVGLVLYDLEAKTAGLVHVMLPDSSLSKTPDINVAKYADTAVEATVKMLLEAGCRKYALKAKMAGGAEMFKFKMTNDLMKVGPRNVLAIKKHLSLLNIPIVSEDTGGNSGRTIEFDPQSAELVIRTVKQGVTTI.

Belongs to the CheD family. As to quaternary structure, forms a complex with CheC.

The enzyme catalyses L-glutaminyl-[protein] + H2O = L-glutamyl-[protein] + NH4(+). Functionally, deamidates glutamine residues to glutamate on methyl-accepting chemotaxis receptors (MCPs). CheD-mediated MCP deamidation is required for productive communication of the conformational signals of the chemoreceptors to the CheA kinase. The protein is Chemoreceptor glutamine deamidase CheD of Bacillus licheniformis (strain ATCC 14580 / DSM 13 / JCM 2505 / CCUG 7422 / NBRC 12200 / NCIMB 9375 / NCTC 10341 / NRRL NRS-1264 / Gibson 46).